A 329-amino-acid polypeptide reads, in one-letter code: U5 small nuclear ribonucleoprotein TSSC4 (329 aa).

Disordered regions lie at residues 1–88 (MAEA…MSST) and 104–156 (ARRA…PDYV). Residues 22–41 (DTLPSDTVSLSDSDSDLSLP) show a composition bias toward low complexity. Phosphoserine occurs at positions 60, 67, 86, 132, 143, and 146. The tract at residues 77–104 (VQPFHLRGMSSTFSQRSRDIFDCLEGAA) is hom2; mediates interaction with the U5 snRNP complexes and required for spliceosomal tri-snRNP complex assembly. Positions 149–316 (VPPVPDYVAH…SRKRSRDHFR (168 aa)) are interaction with SNRNP200. Residues 150–186 (PPVPDYVAHPERWTKYSLEDVTEVSEQSNQATALAFL) are hom3; mediates interaction with the U5 snRNP complexes. Residues 201–250 (FNQDPSSCGEGRVIFTKPVRGVEARHERKRVLGKVGEPGRGGLGNPATDR) form a hom4; necessary for interaction with the PRPF19 complex and required for spliceosomal tri-snRNP complex assembly region. At Lys-217 the chain carries N6-acetyllysine. The tract at residues 221-329 (GVEARHERKR…SSPEDPGAEV (109 aa)) is disordered. Phosphoserine is present on Ser-265. Positions 306–317 (GSRKRSRDHFRN) are enriched in basic residues. Ser-321 carries the phosphoserine modification.

The protein belongs to the TSSC4 family. In terms of assembly, interacts in a RNA-independent manner with distinct U5 snRNP-containing complexes, the mono-U5 snRNP and the post-splicing U5 snRNP-PRPF19 complex. Interacts with SNRNP200; the interaction is direct, excludes recruitment of C9ORF78 and WBP4 to SNRNP200 and negatively regulates its RNA helicase activity. Interacts with PRPF8; the interaction is direct. As to expression, expressed in fetal brain, lung, liver and kidney. Widely expressed in adult tissues.

It localises to the nucleus. The protein localises to the cytoplasm. Functionally, protein associated with the U5 snRNP, during its maturation and its post-splicing recycling and which is required for spliceosomal tri-snRNP complex assembly in the nucleus. Has a molecular sequestering activity and transiently hinders SNRNP200 binding sites for constitutive splicing factors that intervene later during the assembly of the spliceosome and splicing. Together with its molecular sequestering activity, may also function as a molecular adapter and placeholder, coordinating the assembly of the U5 snRNP and its association with the U4/U6 di-snRNP. The protein is U5 small nuclear ribonucleoprotein TSSC4 of Homo sapiens (Human).